A 228-amino-acid polypeptide reads, in one-letter code: Ribosomal RNA small subunit methyltransferase G (228 aa).

S-adenosyl-L-methionine contacts are provided by residues Gly89, Leu94, 140-141, and Arg159; that span reads VE.

It belongs to the methyltransferase superfamily. RNA methyltransferase RsmG family.

It is found in the cytoplasm. The catalysed reaction is guanosine(527) in 16S rRNA + S-adenosyl-L-methionine = N(7)-methylguanosine(527) in 16S rRNA + S-adenosyl-L-homocysteine. Specifically methylates the N7 position of guanine in position 527 of 16S rRNA. The sequence is that of Ribosomal RNA small subunit methyltransferase G from Burkholderia cenocepacia (strain ATCC BAA-245 / DSM 16553 / LMG 16656 / NCTC 13227 / J2315 / CF5610) (Burkholderia cepacia (strain J2315)).